A 337-amino-acid polypeptide reads, in one-letter code: ATP-dependent 6-phosphofructokinase (337 aa).

Glycine 11 contacts ATP. Residue arginine 21–arginine 25 participates in ADP binding. Residues arginine 72 to tyrosine 73 and glycine 102 to serine 105 each bind ATP. Aspartate 103 lines the Mg(2+) pocket. Threonine 125–aspartate 127 provides a ligand contact to substrate. Aspartate 127 serves as the catalytic Proton acceptor. ADP is bound at residue arginine 154. Substrate contacts are provided by residues arginine 162 and methionine 169–arginine 171. Residues glycine 185–aspartate 187, arginine 212, and lysine 214–histidine 216 contribute to the ADP site. Substrate is bound by residues glutamate 223, arginine 245, and histidine 251–arginine 254.

Belongs to the phosphofructokinase type A (PFKA) family. ATP-dependent PFK group I subfamily. Prokaryotic clade 'B1' sub-subfamily. Homotetramer. Mg(2+) serves as cofactor.

The protein resides in the cytoplasm. It catalyses the reaction beta-D-fructose 6-phosphate + ATP = beta-D-fructose 1,6-bisphosphate + ADP + H(+). The protein operates within carbohydrate degradation; glycolysis; D-glyceraldehyde 3-phosphate and glycerone phosphate from D-glucose: step 3/4. Allosterically activated by ADP and other diphosphonucleosides, and allosterically inhibited by phosphoenolpyruvate. In terms of biological role, catalyzes the phosphorylation of D-fructose 6-phosphate to fructose 1,6-bisphosphate by ATP, the first committing step of glycolysis. The protein is ATP-dependent 6-phosphofructokinase of Streptococcus equi subsp. equi (strain 4047).